The sequence spans 153 residues: 6,7-dimethyl-8-ribityllumazine synthase (153 aa).

Residues F23, 57–59 (AYE), and 81–83 (AVI) each bind 5-amino-6-(D-ribitylamino)uracil. 86–87 (AT) is a binding site for (2S)-2-hydroxy-3-oxobutyl phosphate. H89 serves as the catalytic Proton donor. Residue F113 coordinates 5-amino-6-(D-ribitylamino)uracil. (2S)-2-hydroxy-3-oxobutyl phosphate is bound at residue R127.

This sequence belongs to the DMRL synthase family.

It carries out the reaction (2S)-2-hydroxy-3-oxobutyl phosphate + 5-amino-6-(D-ribitylamino)uracil = 6,7-dimethyl-8-(1-D-ribityl)lumazine + phosphate + 2 H2O + H(+). It functions in the pathway cofactor biosynthesis; riboflavin biosynthesis; riboflavin from 2-hydroxy-3-oxobutyl phosphate and 5-amino-6-(D-ribitylamino)uracil: step 1/2. In terms of biological role, catalyzes the formation of 6,7-dimethyl-8-ribityllumazine by condensation of 5-amino-6-(D-ribitylamino)uracil with 3,4-dihydroxy-2-butanone 4-phosphate. This is the penultimate step in the biosynthesis of riboflavin. The polypeptide is 6,7-dimethyl-8-ribityllumazine synthase (Leptospira borgpetersenii serovar Hardjo-bovis (strain JB197)).